The following is a 92-amino-acid chain: Signal recognition particle 19 kDa protein (92 aa).

Belongs to the SRP19 family. Part of the signal recognition particle protein translocation system, which is composed of SRP and FtsY. Archaeal SRP consists of a 7S RNA molecule of 300 nucleotides and two protein subunits: SRP54 and SRP19.

It localises to the cytoplasm. In terms of biological role, involved in targeting and insertion of nascent membrane proteins into the cytoplasmic membrane. Binds directly to 7S RNA and mediates binding of the 54 kDa subunit of the SRP. The chain is Signal recognition particle 19 kDa protein from Haloarcula marismortui (strain ATCC 43049 / DSM 3752 / JCM 8966 / VKM B-1809) (Halobacterium marismortui).